The chain runs to 507 residues: ATP synthase subunit alpha, chloroplastic (507 aa).

170 to 177 (GDRQTGKT) contacts ATP.

This sequence belongs to the ATPase alpha/beta chains family. In terms of assembly, F-type ATPases have 2 components, CF(1) - the catalytic core - and CF(0) - the membrane proton channel. CF(1) has five subunits: alpha(3), beta(3), gamma(1), delta(1), epsilon(1). CF(0) has four main subunits: a, b, b' and c.

The protein localises to the plastid. The protein resides in the chloroplast thylakoid membrane. The catalysed reaction is ATP + H2O + 4 H(+)(in) = ADP + phosphate + 5 H(+)(out). Functionally, produces ATP from ADP in the presence of a proton gradient across the membrane. The alpha chain is a regulatory subunit. This is ATP synthase subunit alpha, chloroplastic from Manihot esculenta (Cassava).